The chain runs to 425 residues: Serine--tRNA ligase (425 aa).

The tract at residues Tyr108 to Pro134 is disordered. Basic and acidic residues predominate over residues Pro117–Pro134. Thr233–Glu235 serves as a coordination point for L-serine. Arg264 to Glu266 is an ATP binding site. Glu287 serves as a coordination point for L-serine. Glu351 to Ser354 lines the ATP pocket. Ser385 serves as a coordination point for L-serine.

It belongs to the class-II aminoacyl-tRNA synthetase family. Type-1 seryl-tRNA synthetase subfamily. Homodimer. The tRNA molecule binds across the dimer.

The protein localises to the cytoplasm. It carries out the reaction tRNA(Ser) + L-serine + ATP = L-seryl-tRNA(Ser) + AMP + diphosphate + H(+). The catalysed reaction is tRNA(Sec) + L-serine + ATP = L-seryl-tRNA(Sec) + AMP + diphosphate + H(+). Its pathway is aminoacyl-tRNA biosynthesis; selenocysteinyl-tRNA(Sec) biosynthesis; L-seryl-tRNA(Sec) from L-serine and tRNA(Sec): step 1/1. In terms of biological role, catalyzes the attachment of serine to tRNA(Ser). Is also able to aminoacylate tRNA(Sec) with serine, to form the misacylated tRNA L-seryl-tRNA(Sec), which will be further converted into selenocysteinyl-tRNA(Sec). This is Serine--tRNA ligase from Synechococcus sp. (strain CC9311).